A 236-amino-acid polypeptide reads, in one-letter code: Phosphoribosylaminoimidazole-succinocarboxamide synthase (236 aa).

The protein belongs to the SAICAR synthetase family.

It carries out the reaction 5-amino-1-(5-phospho-D-ribosyl)imidazole-4-carboxylate + L-aspartate + ATP = (2S)-2-[5-amino-1-(5-phospho-beta-D-ribosyl)imidazole-4-carboxamido]succinate + ADP + phosphate + 2 H(+). Its pathway is purine metabolism; IMP biosynthesis via de novo pathway; 5-amino-1-(5-phospho-D-ribosyl)imidazole-4-carboxamide from 5-amino-1-(5-phospho-D-ribosyl)imidazole-4-carboxylate: step 1/2. In Coprothermobacter proteolyticus (strain ATCC 35245 / DSM 5265 / OCM 4 / BT), this protein is Phosphoribosylaminoimidazole-succinocarboxamide synthase.